We begin with the raw amino-acid sequence, 106 residues long: Guianensin (106 aa).

Residues 1–19 (MKIALICSVFLVCLAYTWA) form the signal peptide. Positions 24 to 74 (CSLPMNDGLCRALHKRYYYDSATKTCKMFYYGGCAGNANNFETKRACAEKC) constitute a BPTI/Kunitz inhibitor domain. 3 disulfide bridges follow: cysteine 24–cysteine 74, cysteine 33–cysteine 57, and cysteine 49–cysteine 70. Basic residues predominate over residues 84 to 93 (RKRKPKKKKN). The interval 84 to 106 (RKRKPKKKKNNKESSEMTIINMD) is disordered.

This sequence belongs to the venom Kunitz-type family. Monomer. Interacts with mouse, bovine and human coagulation factor X (F10) (activated). Interacts with human coagulation factor XI (F11) (activated). Interacts with human coagulation factor IX (F9) (activated). Interacts with host plasmin (PLG). Interacts with host kallikrein. In terms of tissue distribution, female salivary gland (at protein level).

The protein localises to the secreted. In terms of biological role, salivary anticoagulant that targets host coagulation factor Xa (F10). Blocks activity of host prothrombinase (F10-F5). Inhibits factor Xa-mediated acute inflammation in the host. Inhibits other host proteases involved in blood coagulation and inflammation: cathepsin G (CTSG), kallikrein, trypsin, alpha-chymotrypsin, beta-tryptase, plasmin (PLG), elastase, proteinase 3 (PRTN3) and coagulation factor XIa (F11). Inhibits lipopolysaccharide-induced procoagulant effect in human endothelial cells. Inhibits Xa-mediated cleavage of protease-activated receptor 2 (PAR-2/F2RL1) in the host. This is Guianensin from Simulium guianense (Black fly).